The primary structure comprises 446 residues: MSHMTPSEIVNELDDYIIGQHNAKRAVAIALRNRWRRMQLDETLRHEVTPKNILMIGPTGVGKTEIARRLAKLANAPFIKVEATKFTEVGYVGKEVDSIIRDLTDAAVKMVRLQSMEKNRFRAEERAEERILDVLIPQPTPNNWDKIEENNSSEPSSTRQHFRKKLREGQLNEKEIEINLAATPIGVEIMAPPGMEEMTNQLQSMFKNLAGQKQKSRKMKIKEAMKLLIEEEAAKLVNQEKIKEKAIEAVEQNGIVFIDEIDKICKRGDVSGPDVSSEGVQRDLLPLVEGCTVSTKHGMVKTDYILFIASGAFQVASPSDLIPELQGRLPIRVELEALTPKDFQLILTEPNASLTMQYIALMATEGVSISFTEDGIKRIAETAWQVNERTENIGARRLHTILELLMEDISYDASEWHGKTISIDADYVRSHLDDLVSDEDFSRFIL.

Residues Ile-18, 60 to 65 (GVGKTE), Asp-259, Glu-324, and Arg-396 contribute to the ATP site.

It belongs to the ClpX chaperone family. HslU subfamily. In terms of assembly, a double ring-shaped homohexamer of HslV is capped on each side by a ring-shaped HslU homohexamer. The assembly of the HslU/HslV complex is dependent on binding of ATP.

It localises to the cytoplasm. ATPase subunit of a proteasome-like degradation complex; this subunit has chaperone activity. The binding of ATP and its subsequent hydrolysis by HslU are essential for unfolding of protein substrates subsequently hydrolyzed by HslV. HslU recognizes the N-terminal part of its protein substrates and unfolds these before they are guided to HslV for hydrolysis. The chain is ATP-dependent protease ATPase subunit HslU from Baumannia cicadellinicola subsp. Homalodisca coagulata.